Here is a 264-residue protein sequence, read N- to C-terminus: Transformer-2 sex-determining protein (264 aa).

The segment at 1 to 96 is disordered; sequence MDREPLSSGR…HKSREHPQAS (96 aa). Residues 13–22 show a composition bias toward basic residues; sequence CSARYKHKRS. Positions 23-33 are enriched in low complexity; it reads ASSSSAGTTSS. S40 carries the post-translational modification Phosphoserine. The segment covering 47–61 has biased composition (basic residues); sequence SRRHQRSSSRRRSRS. The span at 71 to 85 shows a compositional bias: basic and acidic residues; sequence EPRHRSGRSSRDRER. Residues 97–175 form the RRM domain; it reads RCIGVFGLNT…RRIRVDFSIT (79 aa). The interval 176 to 196 is linker; that stretch reads QRAHTPTPGVYLGRQPRGKAP. Positions 179–264 are disordered; that stretch reads HTPTPGVYLG…PQLRRTSSRY (86 aa). Position 180 is a phosphothreonine (T180). Residues 191 to 206 show a composition bias toward basic residues; that stretch reads PRGKAPRSFSPRRGRR. Residues 207-234 show a composition bias toward basic and acidic residues; the sequence is VYHDRSASPYDNYRDRYDYRNDRYDRNL. 2 positions are modified to phosphoserine: S212 and S214. Over residues 235 to 250 the composition is skewed to basic residues; it reads RRSPSRNRYTRNRSYS. S254 is modified (phosphoserine).

This sequence belongs to the splicing factor SR family. Extensively phosphorylated on serine residues in the RS domain. In terms of tissue distribution, isoform Tmaj and isoform Tmin are expressed in males and females. Isoform msTmaj and isoform msTmin are present only in male germ cells.

In terms of biological role, required for female sex determination in somatic cells and for spermatogenesis in male germ cells. Positive regulator of female-specific splicing and/or polyadenylation of doublesex (dsx) pre-mRNA. Splicing requires an enhancer complex, dsxRE (dsx repeat element: which contains six copies of a 13-nucleotide repeat and a purine-rich enhancer (PRE)). DsxRE is formed through cooperative interactions between tra, tra2 and the sr proteins, and these interactions require both the repeat sequences and PRE. PRE is required for specific binding of tra2 to the dsxRE. Protein-RNA and protein-protein interactions are involved in tra-2 dependent activation and repression of alternative splicing. Together with tra-2, plays a role in switching fru splicing from the male-specific pattern to the female-specific pattern through activation of the female-specific fru 5'-splice site. The sequence is that of Transformer-2 sex-determining protein (tra2) from Drosophila melanogaster (Fruit fly).